The primary structure comprises 358 residues: Phosphoribosyl pyrophosphate synthase-associated protein 2 (358 aa).

Belongs to the ribose-phosphate pyrophosphokinase family.

Functionally, seems to play a negative regulatory role in 5-phosphoribose 1-diphosphate synthesis. The sequence is that of Phosphoribosyl pyrophosphate synthase-associated protein 2 (prpsap2) from Xenopus tropicalis (Western clawed frog).